Consider the following 134-residue polypeptide: Lymphocyte antigen 6G (134 aa).

The N-terminal stretch at 1–26 (MDTCHIAKSCVLILLVVLLCAERAQG) is a signal peptide. Positions 27 to 118 (LECYNCIGVP…PTGGSSWTMA (92 aa)) constitute a UPAR/Ly6 domain. Cystine bridges form between Cys29-Cys53, Cys32-Cys41, Cys46-Cys74, Cys78-Cys98, and Cys99-Cys104. A lipid anchor (GPI-anchor amidated asparagine) is attached at Asn105. The propeptide at 106-134 (AAVPTGGSSWTMAGVLLFSLVSVLLQTFL) is removed in mature form.

In terms of tissue distribution, expressed in bone marrow.

It is found in the cell membrane. This chain is Lymphocyte antigen 6G (Ly6g), found in Mus musculus (Mouse).